The following is a 59-amino-acid chain: Photosystem II reaction center protein K (59 aa).

Residues 1 to 22 constitute a propeptide that is removed on maturation; sequence MLNIFSLICLNSALYSSSFFFG. A helical membrane pass occupies residues 30-50; sequence FLSPIVDFMPVIPLFFFLLAF.

PSII is composed of 1 copy each of membrane proteins PsbA, PsbB, PsbC, PsbD, PsbE, PsbF, PsbH, PsbI, PsbJ, PsbK, PsbL, PsbM, PsbT, PsbX, PsbY, PsbZ, Psb30/Ycf12, at least 3 peripheral proteins of the oxygen-evolving complex and a large number of cofactors. It forms dimeric complexes. This protein, PsbL and plastoquinone-9 are found in PSII dimers but not seen in PSII monomers.

It is found in the plastid. The protein localises to the chloroplast thylakoid membrane. Its function is as follows. One of the components of the core complex of photosystem II (PSII). PSII is a light-driven water:plastoquinone oxidoreductase that uses light energy to abstract electrons from H(2)O, generating O(2) and a proton gradient subsequently used for ATP formation. It consists of a core antenna complex that captures photons, and an electron transfer chain that converts photonic excitation into a charge separation. May be involved in PSII dimerization. In terms of biological role, one of the components of the core complex of photosystem II (PSII). PSII is a light-driven water:plastoquinone oxidoreductase that uses light energy to abstract electrons from H(2)O, generating O(2) and a proton gradient subsequently used for ATP formation. It consists of a core antenna complex that captures photons, and an electron transfer chain that converts photonic excitation into a charge separation. This chain is Photosystem II reaction center protein K, found in Spinacia oleracea (Spinach).